Reading from the N-terminus, the 260-residue chain is Small ribosomal subunit protein eS1 (260 aa).

An N-acetylalanine; partial modification is found at A2.

It belongs to the eukaryotic ribosomal protein eS1 family. As to quaternary structure, component of the small ribosomal subunit. Mature ribosomes consist of a small (40S) and a large (60S) subunit. The 40S subunit contains about 33 different proteins and 1 molecule of RNA (18S). The 60S subunit contains about 49 different proteins and 3 molecules of RNA (25S, 5.8S and 5S).

The protein resides in the cytoplasm. This Mycosarcoma maydis (Corn smut fungus) protein is Small ribosomal subunit protein eS1.